The following is a 242-amino-acid chain: MPLFIVETSCSLISWLFLYLLLCHLNSGRDSEWNCRLVTLFHGILIICLTAYIGFIAGPWPFTHPGTENTYFQILTLVLSLGYFLFDMAWCVYFRTEGPVMLAHHTMSIFGILLALGLGESGIETCAVLFGSEITNPLLQARWFLKRMGCYDSLAGDVVDLLFILLFASVRIGVGSRMLYCELTSPKPSLIVKVGGVAIYTLSWIFMVDIARFACRKTCGKYRRWKEQYKLDGVNGHAVKIK.

The next 6 helical transmembrane spans lie at 3-23, 37-57, 74-94, 109-129, 154-174, and 190-210; these read LFIVETSCSLISWLFLYLLLC, LVTLFHGILIICLTAYIGFIA, ILTLVLSLGYFLFDMAWCVYF, IFGILLALGLGESGIETCAVL, LAGDVVDLLFILLFASVRIGV, and LIVKVGGVAIYTLSWIFMVDI. The TLC domain maps to 28 to 219; the sequence is GRDSEWNCRL…IARFACRKTC (192 aa).

It belongs to the TLCD5 family.

Its subcellular location is the membrane. The protein is TLC domain-containing protein 5 (tlcd5) of Danio rerio (Zebrafish).